The primary structure comprises 146 residues: Hemoglobin subunit beta-2 (146 aa).

N-acetylvaline is present on Val-1. The region spanning 2 to 146 is the Globin domain; the sequence is HLHGDEKAAV…VASALAHKYH (145 aa). Lys-17 is subject to N6-succinyllysine. Ser-44 carries the post-translational modification Phosphoserine. Position 59 is an N6-succinyllysine (Lys-59). The heme b site is built by His-63 and His-92. The residue at position 104 (Arg-104) is an Asymmetric dimethylarginine. At Thr-123 the chain carries Phosphothreonine.

This sequence belongs to the globin family. As to quaternary structure, heterotetramer of two alpha chains and two beta chains. In terms of tissue distribution, red blood cells.

Its function is as follows. Involved in oxygen transport from the lung to the various peripheral tissues. This is Hemoglobin subunit beta-2 (HBB2) from Tapirus terrestris (Lowland tapir).